Consider the following 312-residue polypeptide: Ankyrin repeat family A protein 2 (312 aa).

ANK repeat units follow at residues 147 to 179 (ANSLSAHQLAAQGEMLYLATRIEQENVINHTDE), 180 to 212 (EGFTPLMWAAAHGQIAVVEFLLQNGADPQLLGK), 213 to 245 (GRESALSLACSKGYTDIVKMLLDCGVDVNEYDW), 246 to 278 (NGGTPLLYAVHGNHVKCVKMLLENGADPTIETD), and 279 to 312 (SGYNSMDLAVALGYRGVQQAIESHLLKLLQNIRE).

Interacts (via ANK repeats) with CCDC8 (via PxLPxI/L motif); mediates the interaction with the 3M complex which is composed of CCDC8, CUL7 and OBSL1. Interacts (via ANK repeats) with HDAC4 (via PxLPxI/L motif). Interacts (via ANK repeats) with HDAC5 (via PxLPxI/L motif). Interacts (via ANK repeats) with LRP2/megalin (via PxLPxI/L motif). Interacts (via ANK repeats) with RFX7 (via PxLPxI/L motif). Interacts with AHRR. Interacts with NEK6.

It is found in the cytoplasm. The protein localises to the cytoskeleton. Its subcellular location is the membrane. Functionally, may regulate the interaction between the 3M complex and the histone deacetylases HDAC4 and HDAC5. May also regulate LRP2/megalin. In Mus musculus (Mouse), this protein is Ankyrin repeat family A protein 2 (Ankra2).